Consider the following 128-residue polypeptide: Ribosome-binding factor A (128 aa).

Belongs to the RbfA family. Monomer. Binds 30S ribosomal subunits, but not 50S ribosomal subunits or 70S ribosomes.

It is found in the cytoplasm. One of several proteins that assist in the late maturation steps of the functional core of the 30S ribosomal subunit. Associates with free 30S ribosomal subunits (but not with 30S subunits that are part of 70S ribosomes or polysomes). Required for efficient processing of 16S rRNA. May interact with the 5'-terminal helix region of 16S rRNA. This is Ribosome-binding factor A from Haemophilus influenzae (strain ATCC 51907 / DSM 11121 / KW20 / Rd).